The following is a 455-amino-acid chain: Retinoic acid receptor beta (455 aa).

The segment at 1-87 is modulating; that stretch reads MTTSSRTCPV…PLPPPRVYKP (87 aa). The interval 44-78 is disordered; it reads LQSHPPTSGCSTPSPATVETQSTSSEELVPSPPSP. Positions 47 to 66 are enriched in polar residues; that stretch reads HPPTSGCSTPSPATVETQST. 2 consecutive NR C4-type zinc fingers follow at residues 88 to 108 and 124 to 148; these read CFVC…CEGC and CHRD…LQKC. Residues 88–153 constitute a DNA-binding region (nuclear receptor); it reads CFVCQDKSSG…RLQKCFEVGM (66 aa). Positions 154 to 182 are hinge; the sequence is SKESVRNDRNKKKKEPTKQESTENYEMTA. Positions 183–417 constitute an NR LBD domain; sequence ELDDLTEKIR…PLIQEMLENS (235 aa). Residues 416 to 455 form a disordered region; it reads NSEGHEPLTPTSNGNTAEHSPSISPSSVDNSSVSQSPMVQ. The span at 424 to 434 shows a compositional bias: polar residues; the sequence is TPTSNGNTAEH. Over residues 435 to 455 the composition is skewed to low complexity; the sequence is SPSISPSSVDNSSVSQSPMVQ.

It belongs to the nuclear hormone receptor family. NR1 subfamily. In terms of assembly, heterodimer; with a RXR molecule. Binds DNA preferentially as a RAR/RXR heterodimer.

It is found in the nucleus. Functionally, receptor for retinoic acid. Retinoic acid receptors bind as heterodimers to their target response elements in response to their ligands, all-trans or 9-cis retinoic acid, and regulate gene expression in various biological processes. The RAR/RXR heterodimers bind to the retinoic acid response elements (RARE) composed of tandem 5'-AGGTCA-3' sites known as DR1-DR5. Required for limb and craniofacial development. The protein is Retinoic acid receptor beta (RARB) of Gallus gallus (Chicken).